Here is a 1193-residue protein sequence, read N- to C-terminus: Falcilysin (1193 aa).

Zn(2+) is bound at residue histidine 129. The Proton acceptor role is filled by glutamate 132. Positions 133 and 243 each coordinate Zn(2+). The segment at 376-404 (DKTNNHNNNHSNNQSSENNGYSNGSHSSD) is disordered. Positions 380–394 (NHNNNHSNNQSSENN) are enriched in low complexity. A compositionally biased stretch (polar residues) spans 395–404 (GYSNGSHSSD). Positions 583–619 (LLEGDENYAQEQENLEKQELKKRIENFNEQEKEQVIK) form a coiled coil.

The protein belongs to the peptidase M16 family. Monomer. Component of the hemozoin formation complex (HFC) composed of falcipains FP2A and/or FP2B, plasmepsins PMII, PMIII/HAP and PMIV, heme detoxifying protein HDP and falcilysin FLN. The HFC complex is involved in hemoglobin degradation and detoxification of heme in the food vacuole during the asexual blood stage. Zn(2+) serves as cofactor. Does not require processing for targeting to the food vacuole or maturation.

The protein localises to the vacuole membrane. Its subcellular location is the plastid. It is found in the apicoplast. It localises to the vesicle. Its function is as follows. In the food vacuole, acts downstream of proteases plasmepsins PMI and PMII and falcipains during the catabolism of host hemoglobin by cleaving peptide fragments of alpha and beta hemoglobin subunits generated by PMI and PMII and falcipains. In the apicoplast, degrades apicoplast transit peptides after their cleavage. Prefers bulky hydrophobic amino acids in the P1' position at both acidic and neutral pH. At P2', prefers hydrophobic residues at acidic pH; at neutral pH, these same residues are abundant but prefers Arg. At P3', prefers hydrophobic residues, especially Met, at both pH conditions. At P4' and P5', prefers acidic residues at acidic pH, however, at neutral pH, the enzyme is less selective at these positions. The optimal site cleavage at acidic pH is YNEHS-|-FFMEE and, at neutral pH, MKRHS-|-FRMRG. This Plasmodium falciparum (isolate 3D7) protein is Falcilysin.